A 491-amino-acid chain; its full sequence is Putative mannan endo-1,4-beta-mannosidase 5 (491 aa).

Positions 1–31 (METSYREEEARRKASLLHCIFFFLLGALAMA) are cleaved as a signal peptide. 2 residues coordinate substrate: Trp-134 and Asn-248. Glu-249 (proton donor) is an active-site residue. Tyr-330 provides a ligand contact to substrate. Glu-372 functions as the Nucleophile in the catalytic mechanism. An N-linked (GlcNAc...) asparagine glycan is attached at Asn-385. A substrate-binding site is contributed by Trp-416. N-linked (GlcNAc...) asparagine glycosylation is present at Asn-471.

Belongs to the glycosyl hydrolase 5 (cellulase A) family. In terms of tissue distribution, expression not detected.

It is found in the secreted. It catalyses the reaction Random hydrolysis of (1-&gt;4)-beta-D-mannosidic linkages in mannans, galactomannans and glucomannans.. This Oryza sativa subsp. japonica (Rice) protein is Putative mannan endo-1,4-beta-mannosidase 5 (MAN5).